A 287-amino-acid polypeptide reads, in one-letter code: ADP-dependent (S)-NAD(P)H-hydrate dehydratase (287 aa).

In terms of domain architecture, YjeF C-terminal spans 7 to 283 (TTALVKKFIP…PEISTVMKPF (277 aa)). (6S)-NADPHX is bound by residues A42 and H159. AMP contacts are provided by residues 196-200 (KGSTD) and G224. (6S)-NADPHX is bound at residue D225.

This sequence belongs to the NnrD/CARKD family. Homotetramer. The cofactor is Mg(2+).

The catalysed reaction is (6S)-NADHX + ADP = AMP + phosphate + NADH + H(+). The enzyme catalyses (6S)-NADPHX + ADP = AMP + phosphate + NADPH + H(+). Catalyzes the dehydration of the S-form of NAD(P)HX at the expense of ADP, which is converted to AMP. Together with NAD(P)HX epimerase, which catalyzes the epimerization of the S- and R-forms, the enzyme allows the repair of both epimers of NAD(P)HX, a damaged form of NAD(P)H that is a result of enzymatic or heat-dependent hydration. This is ADP-dependent (S)-NAD(P)H-hydrate dehydratase from Nitrosopumilus maritimus (strain SCM1).